The chain runs to 257 residues: MLKITNLTKRYGSGDPVLKELNLTVEGEQLTSVIGSSGAGKSTLLRCINRLVEPTSGSVELNGTEFTTLSRRELRSARRRIGMVFQGFNLIDRLTVMENVQAGRLGYISTWAALTRRYPKDDIRRAFELMERVGIAHYADKRADELSGGERQRVGVVRALMQRPEILLADEPTASLDPKTSEQIMSLLRDLAQELNLPVIINIHNVTEAKEYSDRIVGMRYGRIIFDDKPAALTRDEMDTIYAGVPAQDRAEVGAVA.

One can recognise an ABC transporter domain in the interval 2–246 (LKITNLTKRY…EMDTIYAGVP (245 aa)). 35–42 (GSSGAGKS) lines the ATP pocket.

Belongs to the ABC transporter superfamily. Phosphonates importer (TC 3.A.1.9.1) family. In terms of assembly, the complex is composed of two ATP-binding proteins (PhnC), two transmembrane proteins (PhnE) and a solute-binding protein (PhnD).

It localises to the cell inner membrane. The enzyme catalyses phosphonate(out) + ATP + H2O = phosphonate(in) + ADP + phosphate + H(+). Its function is as follows. Part of the ABC transporter complex PhnCDE involved in phosphonates import. Responsible for energy coupling to the transport system. The polypeptide is Phosphonates import ATP-binding protein PhnC 1 (Ruegeria sp. (strain TM1040) (Silicibacter sp.)).